The chain runs to 479 residues: FAD-dependent monooxygenase ausM (479 aa).

Positions 40, 54, and 113 each coordinate FAD. Tyr224 is a catalytic residue. Asn289 carries an N-linked (GlcNAc...) asparagine glycan. Positions 316 and 329 each coordinate FAD. A helical transmembrane segment spans residues Thr449 to Tyr469.

It belongs to the paxM FAD-dependent monooxygenase family. Requires FAD as cofactor.

The protein resides in the membrane. It functions in the pathway secondary metabolite biosynthesis; terpenoid biosynthesis. Its function is as follows. FAD-dependent monooxygenase; part of the gene cluster B that mediates the biosynthesis of austinol and dehydroaustinol, two fungal meroterpenoids. The first step of the pathway is the synthesis of 3,5-dimethylorsellinic acid by the polyketide synthase ausA. 3,5-dimethylorsellinic acid is then prenylated by the polyprenyl transferase ausN. Further epoxidation by the FAD-dependent monooxygenase ausM and cyclization by the probable terpene cyclase ausL lead to the formation of protoaustinoid A. Protoaustinoid A is then oxidized to spiro-lactone preaustinoid A3 by the combined action of the FAD-binding monooxygenases ausB and ausC, and the dioxygenase ausE. Acid-catalyzed keto-rearrangement and ring contraction of the tetraketide portion of preaustinoid A3 by ausJ lead to the formation of preaustinoid A4. The aldo-keto reductase ausK, with the help of ausH, is involved in the next step by transforming preaustinoid A4 into isoaustinone which is in turn hydroxylated by the P450 monooxygenase ausI to form austinolide. Finally, the cytochrome P450 monooxygenase ausG modifies austinolide to austinol. Austinol can be further modified to dehydroaustinol which forms a diffusible complex with diorcinol that initiates conidiation. Due to genetic rearrangements of the clusters and the subsequent loss of some enzymes, the end products of the Emericella nidulans austinoid biosynthesis clusters are austinol and dehydroaustinol, even if additional enzymes, such as the O-acetyltransferase ausQ and the cytochrome P450 monooxygenase ausR are still functional. The polypeptide is FAD-dependent monooxygenase ausM (Emericella nidulans (strain FGSC A4 / ATCC 38163 / CBS 112.46 / NRRL 194 / M139) (Aspergillus nidulans)).